The primary structure comprises 223 residues: uncharacterized protein (223 aa).

The interval 117–148 (THAHTHAHTHGHTHTRAHSTHAHTHAHSHYHT) is disordered.

This is an uncharacterized protein from Homo sapiens (Human).